Here is a 434-residue protein sequence, read N- to C-terminus: Gamma-enolase (434 aa).

Residues His-158 and Glu-167 each contribute to the substrate site. The active-site Proton donor is Glu-210. Residues Asp-245, Glu-293, and Asp-318 each contribute to the Mg(2+) site. Residues Glu-293 and Asp-318 each coordinate substrate. The active-site Proton acceptor is the Lys-343. Residues 370–373 (SHRS) and Lys-394 contribute to the substrate site.

This sequence belongs to the enolase family. In terms of assembly, homodimer. Mg(2+) is required as a cofactor. Expressed in the brain and, to much less but significant extents, in the pituitary and adrenal glands.

The protein resides in the cytoplasm. It catalyses the reaction (2R)-2-phosphoglycerate = phosphoenolpyruvate + H2O. The protein operates within carbohydrate degradation; glycolysis; pyruvate from D-glyceraldehyde 3-phosphate: step 4/5. The protein is Gamma-enolase (ENO2) of Gallus gallus (Chicken).